Consider the following 289-residue polypeptide: MGIGLWVRTGLLMAFLTGLLVGIGYLIGGQGGMIIAFTIALFMNFFSYWFSDSIVLSWYNARIVSEEEAPELHRIVEKLAMQAGIPKPRVAIVPTLVPNAFATGRSPEHAVVAVTEGLLRILNRDELEGVIAHEISHIKNRDTLIQTIAAVLAGAIMVLVNFARWSLWFGAYDEDRDGGNIVALILAIILAPIAATLIQLAISRSREYLADETGAKISGKPHALASALMKIEEAVRYRPLKNGNPATAHMFIVNPFRGVDFVELFSTHPPTEKRIERLRKIAMEMGIIF.

A run of 2 helical transmembrane segments spans residues 5–27 (LWVRTGLLMAFLTGLLVGIGYLI) and 40–60 (ALFMNFFSYWFSDSIVLSWYN). Histidine 133 provides a ligand contact to Zn(2+). Residue glutamate 134 is part of the active site. Histidine 137 serves as a coordination point for Zn(2+). A run of 2 helical transmembrane segments spans residues 143–163 (TLIQTIAAVLAGAIMVLVNFA) and 181–201 (IVALILAIILAPIAATLIQLA). Glutamate 207 is a binding site for Zn(2+).

Belongs to the peptidase M48B family. Zn(2+) is required as a cofactor.

It is found in the cell membrane. The chain is Protease HtpX homolog from Pyrococcus furiosus (strain ATCC 43587 / DSM 3638 / JCM 8422 / Vc1).